A 692-amino-acid polypeptide reads, in one-letter code: Enzymatic polyprotein (692 aa).

Asp-36 (for protease activity) is an active-site residue. One can recognise a Reverse transcriptase domain in the interval 227–411; sequence LKKGLIRESQ…QEIEYLGLKI (185 aa).

It belongs to the caulimoviridae enzymatic polyprotein family.

It carries out the reaction DNA(n) + a 2'-deoxyribonucleoside 5'-triphosphate = DNA(n+1) + diphosphate. Encodes for at least two polypeptides: protease (PR) and reverse transcriptase (RT). The protease processes the polyprotein in cis. Reverse transcriptase is multifunctional enzyme that converts the viral RNA genome into dsDNA in viral cytoplasmic capsids. This enzyme displays a DNA polymerase activity that can copy either DNA or RNA templates, and a ribonuclease H (RNase H) activity that cleaves the RNA strand of RNA-DNA heteroduplexes in a partially processive 3'- to 5'-endonucleasic mode. Neo-synthesized pregenomic RNA (pgRNA) are encapsidated, and reverse-transcribed inside the nucleocapsid. Partial (+)DNA is synthesized from the (-)DNA template and generates the relaxed circular DNA (RC-DNA) genome. After budding and infection, the RC-DNA migrates in the nucleus, and is converted into a plasmid-like covalently closed circular DNA (cccDNA). The protein is Enzymatic polyprotein of Soybean chlorotic mottle virus.